Consider the following 246-residue polypeptide: MQHQDVAIIIPSRLSSTRLKQKPLQLIGSTTLIERVFKQVNQANLEHTYVATDSEEIANIIKKVGGKVIFTDSAIPTGTDRTYEAFKLIPNNQNINYIVNVQGDMPFIEPSSILKIIEYLKNSEYDIVTPVVKVDRESVEASSNVTVAVDSAGKALYFSRSLIPNGAEKFLYHVGMYGFRKNALEKFVSLKPTFLEKTERLEQLRVLENGMTIGTCLVENVPISVDTEDDLKKAVKFYENISKLGL.

Belongs to the KdsB family.

It is found in the cytoplasm. The enzyme catalyses 3-deoxy-alpha-D-manno-oct-2-ulosonate + CTP = CMP-3-deoxy-beta-D-manno-octulosonate + diphosphate. Its pathway is nucleotide-sugar biosynthesis; CMP-3-deoxy-D-manno-octulosonate biosynthesis; CMP-3-deoxy-D-manno-octulosonate from 3-deoxy-D-manno-octulosonate and CTP: step 1/1. It participates in bacterial outer membrane biogenesis; lipopolysaccharide biosynthesis. Its function is as follows. Activates KDO (a required 8-carbon sugar) for incorporation into bacterial lipopolysaccharide in Gram-negative bacteria. This is 3-deoxy-manno-octulosonate cytidylyltransferase from Rickettsia felis (strain ATCC VR-1525 / URRWXCal2) (Rickettsia azadi).